The chain runs to 460 residues: NADH-ubiquinone oxidoreductase chain 4 (460 aa).

The next 13 membrane-spanning stretches (helical) occupy residues Ala-20–Leu-42, Pro-61–Ser-81, Arg-94–Ala-113, Ile-117–Asn-139, Thr-148–Met-168, Leu-195–Leu-215, Pro-225–Met-245, Leu-258–Leu-278, Ser-285–Ile-304, Trp-308–Leu-330, Met-351–Pro-371, Leu-394–Met-414, and Leu-436–Trp-456.

The protein belongs to the complex I subunit 4 family.

The protein resides in the mitochondrion membrane. It catalyses the reaction a ubiquinone + NADH + 5 H(+)(in) = a ubiquinol + NAD(+) + 4 H(+)(out). In terms of biological role, core subunit of the mitochondrial membrane respiratory chain NADH dehydrogenase (Complex I) that is believed to belong to the minimal assembly required for catalysis. Complex I functions in the transfer of electrons from NADH to the respiratory chain. The immediate electron acceptor for the enzyme is believed to be ubiquinone. This Oncorhynchus mykiss (Rainbow trout) protein is NADH-ubiquinone oxidoreductase chain 4 (MT-ND4).